The primary structure comprises 183 residues: Thioredoxin-like protein CITRX, chloroplastic (183 aa).

A chloroplast-targeting transit peptide spans 1-81 (MALVQSRTFP…REDYLVKKLS (81 aa)). The Thioredoxin domain occupies 82–183 (AQELQELVKG…MMHDIIDNEM (102 aa)). Catalysis depends on nucleophile residues cysteine 106 and cysteine 109. Cysteine 106 and cysteine 109 are oxidised to a cystine.

This sequence belongs to the thioredoxin family. Plant CITRX-type subfamily. Interacts with FLN1 and FLN2. Interacts with MRL7.

The protein localises to the plastid. Its subcellular location is the chloroplast. Its function is as follows. Thiol-disulfide oxidoreductase that plays a role in proper chloroplast development, most likely through regulating plastid-encoded polymerase (PEP) dependent chloroplast transcription. Acts as a component of the transcriptionally active plastid chromosome that is required for plastid gene expression. The sequence is that of Thioredoxin-like protein CITRX, chloroplastic from Arabidopsis thaliana (Mouse-ear cress).